A 455-amino-acid chain; its full sequence is Probable galactarate/D-glucarate transporter GudP (455 aa).

12 consecutive transmembrane segments (helical) span residues 19 to 39 (WFIV…RATL), 59 to 79 (YVFS…GWLL), 87 to 107 (IIAL…AIGF), 108 to 128 (FSAG…GLSE), 153 to 173 (AFFN…MGWL), 177 to 197 (FGWH…AVIW), 253 to 273 (IGVY…LTWF), 289 to 309 (GFVA…GGIV), 320 to 340 (LTFA…SMIV), 348 to 368 (WLVV…ALGW), 386 to 406 (LFNT…GYIV), and 414 to 434 (GALV…LLLV).

The protein belongs to the major facilitator superfamily. Phthalate permease family.

It is found in the cell membrane. It catalyses the reaction galactarate(in) + H(+)(in) = galactarate(out) + H(+)(out). The catalysed reaction is D-glucarate(in) + H(+)(in) = D-glucarate(out) + H(+)(out). In terms of biological role, probably involved in the uptake of galactarate and/or D-glucarate. This Bacillus subtilis (strain 168) protein is Probable galactarate/D-glucarate transporter GudP.